The primary structure comprises 502 residues: Arabinose import ATP-binding protein AraG (502 aa).

2 ABC transporter domains span residues 5–240 (LEFS…MVGR) and 253–496 (LGGI…LPDK). 37–44 (GENGAGKS) contacts ATP.

This sequence belongs to the ABC transporter superfamily. Arabinose importer (TC 3.A.1.2.2) family. In terms of assembly, the complex is composed of two ATP-binding proteins (AraG), two transmembrane proteins (AraH) and a solute-binding protein (AraF).

It is found in the cell inner membrane. The enzyme catalyses L-arabinose(out) + ATP + H2O = L-arabinose(in) + ADP + phosphate + H(+). Its function is as follows. Part of the ABC transporter complex AraFGH involved in arabinose import. Responsible for energy coupling to the transport system. The sequence is that of Arabinose import ATP-binding protein AraG from Rhizobium johnstonii (strain DSM 114642 / LMG 32736 / 3841) (Rhizobium leguminosarum bv. viciae).